A 319-amino-acid chain; its full sequence is MARQSKKKGRPVSGWIILDKPKGMRSTEAVSQIKYLFHAQKVGHAGTLDPLASGLLPIALGEATKTVPYVMQGTKTYRFHIAWGEERSTDDLEGEITHTSSKRPTREEILALLPQYTGVILQTPPQFSAIKIAGNRAYDLAREGEVVEIPPRQVEIETFKLIEMITKDHSIFEITCGKGTYVRSLARDMGRDLGCYAHIADLRRIAVAPFCENDLITWDELKAVELDKSAKNEKDAPFERNFIKLDELLIETISALECLSHYTLSQTQAQQVMKGNTVLLYHHDVPLDEDEVCVLYQDQLLAIGALEKNQFKPKRLFTI.

The active-site Nucleophile is the Asp-49.

This sequence belongs to the pseudouridine synthase TruB family. Type 1 subfamily.

It carries out the reaction uridine(55) in tRNA = pseudouridine(55) in tRNA. In terms of biological role, responsible for synthesis of pseudouridine from uracil-55 in the psi GC loop of transfer RNAs. This chain is tRNA pseudouridine synthase B, found in Bartonella henselae (strain ATCC 49882 / DSM 28221 / CCUG 30454 / Houston 1) (Rochalimaea henselae).